Consider the following 564-residue polypeptide: Iron-sensing transcriptional repressor (564 aa).

Residues 12-36 (CSNCHKTTTSLWRRGPDNSLLCNAC) form a GATA-type 1 zinc finger. The tract at residues 100 to 170 (ASKSQSGRKS…SSPPHEPSVT (71 aa)) is disordered. At serine 109 the chain carries Phosphoserine. A compositionally biased stretch (low complexity) spans 109–120 (SLSPNPSSVPSS). Positions 135–148 (QIVSDTTTETSNGT) are enriched in polar residues. A GATA-type 2 zinc finger spans residues 172 to 196 (CQNCATTNTPLWRRDESGNPICNAC). Disordered stretches follow at residues 226–285 (GNAN…NTGV), 381–409 (DSSK…NPLG), and 443–496 (LLNP…VQGS). Polar residues-rich tracts occupy residues 240–253 (SGDS…QSTR), 260–271 (SFPNGNGHASGN), 381–407 (DSSK…QSNP), and 450–486 (PSNS…SPVS).

In terms of assembly, interacts with tup11.

It is found in the nucleus. Its activity is regulated as follows. Activated by iron. Transcriptional repressor that binds the consensus promoter sequence 5'-[AT]GATAA-3' during iron-replete conditions to down-regulate transcription of target genes. Represses the expression of the iron transporter fio1 in response to high iron concentrations. Also represses the expression of str1, str2 and str3. Represses the expression of shu1 in presence of iron. The protein is Iron-sensing transcriptional repressor of Schizosaccharomyces pombe (strain 972 / ATCC 24843) (Fission yeast).